Here is a 249-residue protein sequence, read N- to C-terminus: Segregation and condensation protein A (249 aa).

Belongs to the ScpA family. Component of a cohesin-like complex composed of ScpA, ScpB and the Smc homodimer, in which ScpA and ScpB bind to the head domain of Smc. The presence of the three proteins is required for the association of the complex with DNA.

Its subcellular location is the cytoplasm. Participates in chromosomal partition during cell division. May act via the formation of a condensin-like complex containing Smc and ScpB that pull DNA away from mid-cell into both cell halves. The chain is Segregation and condensation protein A from Listeria innocua serovar 6a (strain ATCC BAA-680 / CLIP 11262).